The sequence spans 485 residues: Fumarate hydratase, mitochondrial (485 aa).

Residues 1 to 19 (MLSASRKLNNQQFLKTIRN) constitute a mitochondrion transit peptide. Substrate-binding positions include 118-120 (SGT), 150-153 (HPND), 160-162 (SSN), and T208. Residue H209 is the Proton donor/acceptor of the active site. Residue S339 is part of the active site. Substrate contacts are provided by residues S340 and 345–347 (KVN).

It belongs to the class-II fumarase/aspartase family. Fumarase subfamily. As to quaternary structure, homotetramer.

Its subcellular location is the mitochondrion. The protein resides in the cytoplasm. The enzyme catalyses (S)-malate = fumarate + H2O. The protein operates within carbohydrate metabolism; tricarboxylic acid cycle; (S)-malate from fumarate: step 1/1. In terms of biological role, catalyzes the reversible stereospecific interconversion of fumarate to L-malate. Functionally, catalyzes the hydration of fumarate to L-malate in the tricarboxylic acid (TCA) cycle to facilitate a transition step in the production of energy in the form of NADH. The protein is Fumarate hydratase, mitochondrial of Dictyostelium discoideum (Social amoeba).